The chain runs to 117 residues: UPF0102 protein YE3728 (117 aa).

This sequence belongs to the UPF0102 family.

This is UPF0102 protein YE3728 from Yersinia enterocolitica serotype O:8 / biotype 1B (strain NCTC 13174 / 8081).